The chain runs to 437 residues: Zinc finger CCCH domain-containing protein 40 (437 aa).

The C3H1-type zinc finger occupies 6-33 (MYKTKLCILFNKTGDCSRPNCTFAHGNA). The tract at residues 35 to 107 (LRRPGESSFT…MPFENRRDKD (73 aa)) is disordered. The span at 48–85 (HNMDSDLRDRRHNMDSDLRDRLGRQFSPERRPSLDRSG) shows a compositional bias: basic and acidic residues. Residues 145–244 (NNVLEEQLKD…LGNQLSTYLA (100 aa)) adopt a coiled-coil conformation. Phosphoserine is present on Ser-259. Disordered stretches follow at residues 266 to 360 (RNLR…RRRF) and 380 to 437 (EFDD…DDSV). The span at 307-319 (RGEEEKVENEKKR) shows a compositional bias: basic and acidic residues. Composition is skewed to acidic residues over residues 333–343 (EEESGAWNDED) and 383–392 (DVAESEEENP). Residues 426–437 (MEQKKAYDDDSV) are compositionally biased toward basic and acidic residues.

This Arabidopsis thaliana (Mouse-ear cress) protein is Zinc finger CCCH domain-containing protein 40.